The sequence spans 213 residues: Large ribosomal subunit protein uL1 (213 aa).

Belongs to the universal ribosomal protein uL1 family. In terms of assembly, part of the 50S ribosomal subunit.

Functionally, binds directly to 23S rRNA. Probably involved in E site tRNA release. Its function is as follows. Protein L1 is also a translational repressor protein, it controls the translation of its operon by binding to its mRNA. The protein is Large ribosomal subunit protein uL1 of Methanoculleus marisnigri (strain ATCC 35101 / DSM 1498 / JR1).